A 244-amino-acid chain; its full sequence is MKLIVLENEEQVANKAAQIISEQIKNKPNSVLGLATGSTPINTYKKLIQMYQEKQISFKDVISFNLDEYKDIDKNNKQSYYYFMKEQLFNYIDINKNNCYIPNASFYDNPIAYDELIKKANGIDLQLLGIGINGHIGFNEPDSSFDSLTQIVDLTNSTIKANSRFFDSIDQVPTQAISMGLQSIMNAKKILLLATGINKSEAIYHLIKGQITKKWPCTILQKHNDVTIIIDKNAASKLTNLKAN.

The active-site Proton acceptor; for enolization step is the Asp67. Residue Asn133 is the For ring-opening step of the active site. His135 serves as the catalytic Proton acceptor; for ring-opening step. Glu140 functions as the For ring-opening step in the catalytic mechanism.

Belongs to the glucosamine/galactosamine-6-phosphate isomerase family. NagB subfamily.

The catalysed reaction is alpha-D-glucosamine 6-phosphate + H2O = beta-D-fructose 6-phosphate + NH4(+). Its pathway is amino-sugar metabolism; N-acetylneuraminate degradation; D-fructose 6-phosphate from N-acetylneuraminate: step 5/5. Catalyzes the reversible isomerization-deamination of glucosamine 6-phosphate (GlcN6P) to form fructose 6-phosphate (Fru6P) and ammonium ion. This is Glucosamine-6-phosphate deaminase from Mycoplasma mycoides subsp. mycoides SC (strain CCUG 32753 / NCTC 10114 / PG1).